The sequence spans 619 residues: Putative zinc metalloprotease CT_072 (619 aa).

Zn(2+) is bound at residue H20. The active site involves E21. Zn(2+) is bound at residue H24. The next 3 helical transmembrane spans lie at 103–125 (IFVL…GILY), 558–580 (VLNL…WEIL), and 593–610 (ALVP…FLTL).

This sequence belongs to the peptidase M50B family. The cofactor is Zn(2+).

The protein resides in the cell inner membrane. This is Putative zinc metalloprotease CT_072 from Chlamydia trachomatis serovar D (strain ATCC VR-885 / DSM 19411 / UW-3/Cx).